Consider the following 372-residue polypeptide: Germination protease (372 aa).

Residues 1–15 (MVKELNLEQYNVRTD) constitute a propeptide that is removed on maturation.

The protein belongs to the peptidase A25 family. Homotetramer. Post-translationally, autoproteolytically processed. The inactive tetrameric zymogen termed p46 autoprocesses to a smaller form termed p41, which is active only during spore germination.

The catalysed reaction is Endopeptidase action with P4 Glu or Asp, P1 preferably Glu &gt; Asp, P1' hydrophobic and P2' Ala.. Initiates the rapid degradation of small, acid-soluble proteins during spore germination. This Halalkalibacterium halodurans (strain ATCC BAA-125 / DSM 18197 / FERM 7344 / JCM 9153 / C-125) (Bacillus halodurans) protein is Germination protease.